A 726-amino-acid polypeptide reads, in one-letter code: Long-chain-alcohol oxidase FAO4A (726 aa).

Residues 103-119 form a helical membrane-spanning segment; that stretch reads ILLNWSSSYFSLLRMLF. Residue 224–239 coordinates FAD; that stretch reads CDAVVVGSGSGGGVAA. The Proton acceptor role is filled by His-659.

The protein belongs to the GMC oxidoreductase family.

The protein resides in the membrane. The catalysed reaction is a long-chain primary fatty alcohol + O2 = a long-chain fatty aldehyde + H2O2. Functionally, long-chain fatty alcohol oxidase involved in the omega-oxidation pathway of lipid degradation. This is Long-chain-alcohol oxidase FAO4A (FAO4A) from Arabidopsis thaliana (Mouse-ear cress).